The sequence spans 594 residues: 4-alpha-glucanotransferase DPE1, chloroplastic/amyloplastic (594 aa).

The transit peptide at 1–37 directs the protein to the chloroplast; that stretch reads MATLSLPLPHLTQAIPARARPRPRPLRGIPARLLSCR.

This sequence belongs to the disproportionating enzyme family.

The protein localises to the plastid. It is found in the chloroplast. The protein resides in the amyloplast. It carries out the reaction Transfers a segment of a (1-&gt;4)-alpha-D-glucan to a new position in an acceptor, which may be glucose or a (1-&gt;4)-alpha-D-glucan.. Its function is as follows. Chloroplastic alpha-glucanotransferase involved in maltotriose metabolism. This Oryza sativa subsp. japonica (Rice) protein is 4-alpha-glucanotransferase DPE1, chloroplastic/amyloplastic (DPE1).